We begin with the raw amino-acid sequence, 516 residues long: uncharacterized protein (516 aa).

One can recognise a uDENN domain in the interval 31-185 (ACIFLSKFDM…LDKFDIFEKF (155 aa)). The cDENN domain occupies 211-365 (HLVEYLPYWT…LEVYEKLILG (155 aa)). A dDENN domain is found at 367–513 (LQEDASTNAT…DISNLPECLG (147 aa)). Residues cysteine 511 and cysteine 516 are each lipidated (S-palmitoyl cysteine).

Palmitoylated by AKR1.

The protein localises to the lipid droplet. In terms of biological role, may be involved in lipid metabolism. This is an uncharacterized protein from Saccharomyces cerevisiae (strain ATCC 204508 / S288c) (Baker's yeast).